The primary structure comprises 1325 residues: MNRRYVFSLSAGLLASSCMGAIMPVPVARAQQASTAMTGAQATGGTAAPRQILLQQARFWLQQQQYDNARQALQNAQRIAPDAPDVLEVQGEYQTAMGNREAAADTLRHLQEVAPGSVAANSLSDLLHERSISTGDLSHVRSLAASGHSAEAVAGYQKLFNGGRPPHSLAIEYYQTMAGVPADWDQARAGLAGLVAANPQDYRAQLAFAQTLTYNTSTRMEGLARLKDLQGFRTQAPVEAAAAAQSYRQTLSWLPVTAETQPLMQQWLTAHPDDTALKEHMLHPPGGPPDKAGLARQAGFQQLNSGRLSAAEQSFQSALQINSHDADSLGGMGLVSMRQGDAAEARRYFQEAMAADPKTADRWRPALAGMEISGDYAAVRQLIAAHQYTEAKQRLTSLARQPGQFTGATLMLADLQRTTGQIDASEQEYRSVLARDPNNQLALMGLARVDMAQGNTAEARQLLSRVGPQYATEVGEIEVTGLMAAASHTSDSARKVAILREAMTQAPRDPWVRINLANALQQQGDVAEAGRVMQPILANPVTAQDRQAGILYTYGAGNDAATRRLLSGLSPEDYSPAIRSIAEEMQIKEDLASRLSMVPNPVPLIREALAPPDPTGARGVAVADLFRQRGDMIHARMALRIASTRTIDLSPDQRLAYATEYMKISNPVAAARLLAPLGDGSGSGAGNALLPEQQQTLQQLRMGIAVAQSDLLNQRGDQAQAYDHLAPALRADPEATSPKLALARLYNGEGKSSKALDIDLAVLRHNPQDLDARQAAVQAAVNSGRKSLATHLAMDGVQESPMDARAWLGMAVADQADGHGHRTIADLRRAYDLRLQQVEGSRSASGPAATEEDALAPPSSNPFRHHGYGRQTELGAPVTGGSYSMEATSPEAADQMLSSISGQINTLRENLAPSIDGGLGFRSRSGEHGMGRLTEANIPIVGRLPLQAGESSLTFSITPTMIWSGDLNAGSVYDVPRYGTNMATEAYNQYVNSLSQNNSSSSLRTQQIQGGQGEAGFAPDVQFSNSWVRADVGASPIGFPITNVLGGVEFSPRVGPVTFRVSAERRSITNSVLSYGGLRDPNYNSALGRYALNHYGSQLASQWGQEWGGVVTNHFHGQVEATLGNTILYGGGGYAIQTGKNTRSNNEREAGIGANTLVWHNANMLVRIGVSLTYFGYANNQDFYTYGQGGYFSPQSYYSATVPIRYAGQHKRLDWDVTGSVGYQVFHEHSSPFFPTSSLLQSGAQYIADSYMQNATASDYLSEETVDRAYYPGDSIASLTGGFNARVGYRFTHNLRLDLSGRWQKAGNWTESGAMISVHYLIMDQ.

An N-terminal signal peptide occupies residues 1-30; it reads MNRRYVFSLSAGLLASSCMGAIMPVPVARA. TPR repeat units follow at residues 50–83, 85–117, 292–325, 326–359, 406–439, 558–591, 702–735, and 737–769; these read RQIL…APDA, DVLE…APGS, AGLA…NSHD, ADSL…DPKT, TGAT…DPNN, NDAA…KEDL, MGIA…DPEA, and SPKL…NPQD. A disordered region spans residues 838-886; that stretch reads VEGSRSASGPAATEEDALAPPSSNPFRHHGYGRQTELGAPVTGGSYSME.

This sequence belongs to the AcsC/BcsC family.

Its subcellular location is the cell outer membrane. It functions in the pathway glycan metabolism; bacterial cellulose biosynthesis. Required for maximal bacterial cellulose synthesis. It may be involved in the formation of a membrane complex for extrusion of the cellulose product. This chain is Cellulose synthase 1 operon protein C (bcsCI), found in Komagataeibacter xylinus (Gluconacetobacter xylinus).